The chain runs to 1347 residues: Spermatogenesis-associated protein 31A7 (1347 aa).

Residues 23–43 (PWVLDIFLTLVFALGFFFLLL) traverse the membrane as a helical segment. 7 disordered regions span residues 55 to 88 (PSPSPGKRKCPVGRRRRPRGRMKNHSLRAGRECP), 106 to 233 (GPHL…RDST), 374 to 397 (QDTTNPKPFWNMGENSKQLPGPQK), 628 to 658 (DESPGTSQAKGKPSPWQSSMSTGESSKEAQK), 900 to 955 (RGIP…REAV), 1084 to 1161 (VHEE…PSVS), and 1313 to 1335 (KAVSPVSPPQHWPKTSGASSHHH). The segment covering 60–82 (GKRKCPVGRRRRPRGRMKNHSLR) has biased composition (basic residues). Over residues 165–178 (LASTPSPGPMTTSV) the composition is skewed to polar residues. The segment covering 198-211 (PEPPALFPHPPHTP) has biased composition (pro residues). Composition is skewed to polar residues over residues 631 to 651 (PGTSQAKGKPSPWQSSMSTGE) and 927 to 948 (LTYSLTGSIQQSRSLGAQSSKA). Composition is skewed to basic and acidic residues over residues 1108 to 1127 (HKSEKSRKPNLEKHEERLEG) and 1137 to 1146 (RKTEDTHQDE).

This sequence belongs to the SPATA31 family.

Its subcellular location is the membrane. In terms of biological role, may play a role in spermatogenesis. In Homo sapiens (Human), this protein is Spermatogenesis-associated protein 31A7.